Reading from the N-terminus, the 196-residue chain is Ribosome maturation factor RimP (196 aa).

The disordered stretch occupies residues 163–196 (GLAPSKPTGPAPKRPKPKTNSSSNEPAAKKPRAE).

This sequence belongs to the RimP family.

It localises to the cytoplasm. Required for maturation of 30S ribosomal subunits. The chain is Ribosome maturation factor RimP from Stenotrophomonas maltophilia (strain R551-3).